A 265-amino-acid chain; its full sequence is Glutamate racemase (265 aa).

Residues 10 to 11 (DS) and 42 to 43 (YG) contribute to the substrate site. Cys73 acts as the Proton donor/acceptor in catalysis. Residue 74–75 (NT) coordinates substrate. The active-site Proton donor/acceptor is the Cys180. 181–182 (TH) contributes to the substrate binding site.

The protein belongs to the aspartate/glutamate racemases family.

The enzyme catalyses L-glutamate = D-glutamate. It functions in the pathway cell wall biogenesis; peptidoglycan biosynthesis. Functionally, provides the (R)-glutamate required for cell wall biosynthesis. The protein is Glutamate racemase of Synechococcus sp. (strain CC9605).